Here is a 397-residue protein sequence, read N- to C-terminus: uncharacterized protein (397 aa).

Disordered stretches follow at residues 159 to 203 and 221 to 397; these read LNSS…KSTI and NSVK…KTKN. The segment covering 221-240 has biased composition (low complexity); sequence NSVKSSPSKSFVSISSPVQS. 2 stretches are compositionally biased toward polar residues: residues 285 to 309 and 320 to 330; these read TSTL…SSST and VNPNSTSSVTF. The segment at residues 342 to 371 is a DNA-binding region (zn(2)-C6 fungal-type); that stretch reads CSRCKKSKKGCDRQRPCGRCRDAGLNSEDC. Residues 350-363 are compositionally biased toward basic and acidic residues; it reads KGCDRQRPCGRCRD. Residues 383-397 show a composition bias toward basic residues; sequence RKPRGRGRGRPKTKN.

The protein localises to the nucleus. This is an uncharacterized protein from Schizosaccharomyces pombe (strain 972 / ATCC 24843) (Fission yeast).